A 192-amino-acid polypeptide reads, in one-letter code: Immunity protein YqcF (192 aa).

As to quaternary structure, probably interacts with cognate toxin YqcG but not with other non-cognate toxins. The interaction inhibits the toxic activity of YqcG.

The protein resides in the cytoplasm. In terms of biological role, immunity component of one of 6 LXG toxin-immunity modules in this strain. They promote kin selection, mediate competition in biofilms, and drive spatial segregation of different strains, indicating that LXG toxins may help avoid warfare between strains in biofilms. Mediates intercellular competition during biofilm formation; disruption of the operon disadvantages the bacteria, but overexpression of the cognate immunity protein restores growth in competition with wild-type. In situ neutralizes the toxic effect of cognate toxin YqcG. Neutralizes the toxic activity of cognate toxin YqcG upon expression in E.coli. Does not have immunity protein activity on other LXG toxins. The chain is Immunity protein YqcF (yqcF) from Bacillus subtilis (strain 168).